The primary structure comprises 129 residues: Follitropin subunit beta (129 aa).

The first 18 residues, 1–18 (MKSVQFCFLFCCWRVICC), serve as a signal peptide directing secretion. 6 disulfides stabilise this stretch: cysteine 21–cysteine 69, cysteine 35–cysteine 84, cysteine 38–cysteine 122, cysteine 46–cysteine 100, cysteine 50–cysteine 102, and cysteine 105–cysteine 112. N-linked (GlcNAc...) asparagine glycans are attached at residues asparagine 25 and asparagine 42.

It belongs to the glycoprotein hormones subunit beta family. Heterodimer. The active follitropin is a heterodimer composed of an alpha chain/CGA shared with other hormones and a unique beta chain/FSHB shown here.

The protein localises to the secreted. Its function is as follows. Together with the alpha chain CGA constitutes follitropin, the follicle-stimulating hormone, and provides its biological specificity to the hormone heterodimer. Binds FSHR, a G protein-coupled receptor, on target cells to activate downstream signaling pathways. Follitropin is involved in follicle development and spermatogenesis in reproductive organs. This chain is Follitropin subunit beta (FSHB), found in Panthera tigris altaica (Siberian tiger).